Consider the following 593-residue polypeptide: Arylsulfatase D (593 aa).

An N-terminal signal peptide occupies residues 1 to 33 (MRSAARRGRAAPAARDSLPVLLFLCLLLKTCEP). Ca(2+) is bound by residues Asp-49 and Asp-50. Residue Asn-61 is glycosylated (N-linked (GlcNAc...) asparagine). Cys-89 provides a ligand contact to Ca(2+). Catalysis depends on Cys-89, which acts as the Nucleophile. Cys-89 carries the 3-oxoalanine (Cys) modification. The N-linked (GlcNAc...) asparagine glycan is linked to Asn-128. Lys-148 contacts substrate. The active site involves His-150. His-304 contacts substrate. An N-linked (GlcNAc...) asparagine glycan is attached at Asn-347. Ca(2+) contacts are provided by Asp-356 and His-357. Substrate is bound at residue Lys-381.

This sequence belongs to the sulfatase family. The cofactor is Ca(2+). In terms of processing, the conversion to 3-oxoalanine (also known as C-formylglycine, FGly), of a serine or cysteine residue in prokaryotes and of a cysteine residue in eukaryotes, is critical for catalytic activity. In terms of tissue distribution, expressed in the pancreas, kidney, liver, lung, placenta, brain and heart.

It localises to the lysosome. This chain is Arylsulfatase D (ARSD), found in Homo sapiens (Human).